The sequence spans 300 residues: Ribosomal protein L11 methyltransferase (300 aa).

4 residues coordinate S-adenosyl-L-methionine: T144, G165, D187, and N235.

It belongs to the methyltransferase superfamily. PrmA family.

The protein resides in the cytoplasm. The enzyme catalyses L-lysyl-[protein] + 3 S-adenosyl-L-methionine = N(6),N(6),N(6)-trimethyl-L-lysyl-[protein] + 3 S-adenosyl-L-homocysteine + 3 H(+). Methylates ribosomal protein L11. The chain is Ribosomal protein L11 methyltransferase from Prochlorococcus marinus (strain MIT 9515).